Reading from the N-terminus, the 455-residue chain is MGQAAWKGFVLSLFDYKTAKFVVAKSKKVGLLYRVLQLIILLYLLIWVFLIKKSYQDIDTSLQSAVVTKVKGVAYTNTTMLGERLWDVADFVIPSQGENVFFVVTNLIVTPNQRQGICAEREGIPDGECSEDDDCHAGESVVAGHGLKTGRCLRVGNSTRGTCEIFAWCPVETKSMPTDPLLKDAESFTIFIKNFIRFPKFNFSKANVLETDNKHFLKTCHFSSTNLYCPIFRLGSIVRWAGADFQDIALKGGVIGIYIEWDCDLDKAASKCNPHYYFNRLDNKHTHSISSGYNFRFARYYRDPNGVEFRDLMKAYGIRFDVIVNGKAGKFSIIPTVINIGSGLALMGAGAFFCDLVLIYLIRKSEFYRDKKFEKVRGQKEDANVEVEANEMEQERPEDEPLERVRQDEQSQELAQSGRKQNSNCQVLLEPARFGLRENAIVNVKQSQILHPVKT.

Residues 1–34 lie on the Cytoplasmic side of the membrane; sequence MGQAAWKGFVLSLFDYKTAKFVVAKSKKVGLLYR. Residues 35-55 traverse the membrane as a helical segment; it reads VLQLIILLYLLIWVFLIKKSY. Residues 56-341 lie on the Extracellular side of the membrane; it reads QDIDTSLQSA…SIIPTVINIG (286 aa). ATP contacts are provided by K69 and K71. N-linked (GlcNAc...) asparagine glycosylation occurs at N77. Intrachain disulfides connect C118-C169, C129-C152, and C135-C163. The N-linked (GlcNAc...) asparagine glycan is linked to N157. ATP is bound at residue T189. N202 is a glycosylation site (N-linked (GlcNAc...) asparagine). 2 disulfide bridges follow: C220–C229 and C263–C272. 3 residues coordinate ATP: N294, R296, and K314. Residues 342-362 traverse the membrane as a helical segment; the sequence is SGLALMGAGAFFCDLVLIYLI. At 363-455 the chain is on the cytoplasmic side; it reads RKSEFYRDKK…QSQILHPVKT (93 aa). The span at 384–401 shows a compositional bias: acidic residues; sequence NVEVEANEMEQERPEDEP. Residues 384–422 form a disordered region; that stretch reads NVEVEANEMEQERPEDEPLERVRQDEQSQELAQSGRKQN. Residues 412–422 are compositionally biased toward polar residues; sequence QELAQSGRKQN.

This sequence belongs to the P2X receptor family. Functional P2XRs are organized as homomeric and heteromeric trimers. Homotrimer. Forms heterotrimer with P2RX1. As to expression, predominantly expressed in heart but are also present in brain, spinal cord and adrenal gland.

It localises to the cell membrane. The catalysed reaction is Na(+)(in) = Na(+)(out). It carries out the reaction Ca(2+)(in) = Ca(2+)(out). It catalyses the reaction chloride(in) = chloride(out). Activated by ATP. Slowly desensitizing. Not activated by ATP agonist alpha/beta-methylene-ATP. Highly sensitive to the antagonists suramin and PPADS. Functionally, ATP-gated nonselective transmembrane cation channel. Permeable to potassium, sodium and calcium. Unlike other P2RX receptors, the P2X5 receptor is also permeable to chloride. Acts as an important regulator of inflammatory-related bone loss and osteoclast multinucleation. In Rattus norvegicus (Rat), this protein is P2X purinoceptor 5 (P2rx5).